The chain runs to 48 residues: MAVPKRRVSKTRAAKRRTHYKVTLPMPIKDKDGSYKMPHRVNPVTKEY.

Positions 24–48 are disordered; the sequence is LPMPIKDKDGSYKMPHRVNPVTKEY.

Belongs to the bacterial ribosomal protein bL32 family.

This chain is Large ribosomal subunit protein bL32, found in Campylobacter lari (strain RM2100 / D67 / ATCC BAA-1060).